The primary structure comprises 289 residues: BTB/POZ domain-containing protein KCTD7 (289 aa).

The tract at residues 1-40 is disordered; it reads MVVVTGREPDSRRPDGAMSSSDAEDDFLEPATPTATQAGH. The BTB domain maps to 53–141; sequence VPLNIGGAHF…YAIGPLLEQL (89 aa).

As to quaternary structure, interacts with CUL3.

It is found in the cell membrane. Its subcellular location is the cytoplasm. It localises to the cytosol. In terms of biological role, may be involved in the control of excitability of cortical neurons. This chain is BTB/POZ domain-containing protein KCTD7 (KCTD7), found in Bos taurus (Bovine).